The sequence spans 350 residues: Phenylalanine--tRNA ligase alpha subunit (350 aa).

Glu257 contributes to the Mg(2+) binding site.

This sequence belongs to the class-II aminoacyl-tRNA synthetase family. Phe-tRNA synthetase alpha subunit type 1 subfamily. Tetramer of two alpha and two beta subunits. It depends on Mg(2+) as a cofactor.

It localises to the cytoplasm. The catalysed reaction is tRNA(Phe) + L-phenylalanine + ATP = L-phenylalanyl-tRNA(Phe) + AMP + diphosphate + H(+). In Listeria monocytogenes serovar 1/2a (strain ATCC BAA-679 / EGD-e), this protein is Phenylalanine--tRNA ligase alpha subunit.